Reading from the N-terminus, the 632-residue chain is Transcription factor asR4 (632 aa).

Residues 26–52 (CDSCNKSKTKCPGGNPCPLCQCSGIRC) constitute a DNA-binding region (zn(2)-C6 fungal-type). Residues 101 to 111 (HISSNPSPVGS) are compositionally biased toward polar residues. 3 disordered regions span residues 101 to 129 (HISS…QQQQ), 270 to 311 (SNEY…GDGH), and 324 to 356 (TSAS…VPRT). Residues 112 to 129 (QSQQQQHPQQAGQQQQQQ) show a composition bias toward low complexity. 3 stretches are compositionally biased toward polar residues: residues 270-286 (SNEY…TTDD), 294-306 (PDSS…SSSV), and 329-340 (IVEQQSIPTSPV).

Its subcellular location is the nucleus. In terms of biological role, transcription factor; part of the gene cluster that mediates the biosynthesis of xenovulene A, an unusual meroterpenoid that has potent inhibitory effects on the human gamma-aminobutyrate A (GABAA) benzodiazepine receptor. The sequence is that of Transcription factor asR4 from Sarocladium schorii (Acremonium strictum (strain IMI 501407)).